An 81-amino-acid polypeptide reads, in one-letter code: MQPLVIAAIVALVVAGIIAIVVWSIVFIEYRKIRRQRKIDKLIDRISERAEDSGNESEGDQEELSALVGMGHDAPWVINDL.

Topologically, residues 1–7 (MQPLVIA) are extracellular. A helical transmembrane segment spans residues 8 to 28 (AIVALVVAGIIAIVVWSIVFI). The Cytoplasmic segment spans residues 29–81 (EYRKIRRQRKIDKLIDRISERAEDSGNESEGDQEELSALVGMGHDAPWVINDL). A phosphoserine; by host CK2 mark is found at Ser-53 and Ser-57.

It belongs to the HIV-1 VPU protein family. Homopentamer. Interacts with host CD4 and BRTC; these interactions induce proteasomal degradation of CD4. Interacts with host BST2; this interaction leads to the degradation of host BST2. Interacts with host FBXW11. Interacts with host AP1M1; this interaction plays a role in the mistrafficking and subsequent degradation of host BST2. Interacts with host RANBP2; this interaction allows Vpu to down-regulate host BLM sumoylation. In terms of processing, phosphorylated by host CK2. This phosphorylation is necessary for interaction with human BTRC and degradation of CD4.

It localises to the host membrane. With respect to regulation, ion channel activity is inhibited by hexamethylene amiloride in vitro. Its function is as follows. Enhances virion budding by targeting host CD4 and Tetherin/BST2 to proteasome degradation. Degradation of CD4 prevents any unwanted premature interactions between viral Env and its host receptor CD4 in the endoplasmic reticulum. Degradation of antiretroviral protein Tetherin/BST2 is important for virion budding, as BST2 tethers new viral particles to the host cell membrane. Mechanistically, Vpu bridges either CD4 or BST2 to BTRC, a substrate recognition subunit of the Skp1/Cullin/F-box protein E3 ubiquitin ligase, induces their ubiquitination and subsequent proteasomal degradation. The alteration of the E3 ligase specificity by Vpu seems to promote the degradation of host IKBKB, leading to NF-kappa-B down-regulation and subsequent apoptosis. Acts as a viroporin that forms an oligomeric ion channel in membranes. Modulates the host DNA repair mechanisms to promote degradation of nuclear viral cDNA in cells that are already productively infected in order to suppress immune sensing and proviral hyper-integration (superinfection). Manipulates PML-NBs and modulates SUMOylation of host BLM protein thereby enhancing its DNA-end processing activity toward viral unintegrated linear DNA. Also inhibits RAD52-mediated homologous repair of viral cDNA, preventing the generation of dead-end circular forms of single copies of the long terminal repeat and permitting sustained nucleolytic attack. In Homo sapiens (Human), this protein is Protein Vpu.